The sequence spans 277 residues: 4-hydroxy-3-methylbut-2-enyl diphosphate reductase (277 aa).

Position 12 (Cys-12) interacts with [4Fe-4S] cluster. The (2E)-4-hydroxy-3-methylbut-2-enyl diphosphate site is built by His-36 and His-70. Residues His-36 and His-70 each coordinate dimethylallyl diphosphate. Positions 36 and 70 each coordinate isopentenyl diphosphate. Residue Cys-92 coordinates [4Fe-4S] cluster. A (2E)-4-hydroxy-3-methylbut-2-enyl diphosphate-binding site is contributed by His-120. A dimethylallyl diphosphate-binding site is contributed by His-120. His-120 provides a ligand contact to isopentenyl diphosphate. Glu-122 (proton donor) is an active-site residue. Thr-158 is a (2E)-4-hydroxy-3-methylbut-2-enyl diphosphate binding site. Cys-186 contributes to the [4Fe-4S] cluster binding site. Residues Ser-214, Asn-216, and Ser-258 each contribute to the (2E)-4-hydroxy-3-methylbut-2-enyl diphosphate site. Dimethylallyl diphosphate is bound by residues Ser-214, Asn-216, and Ser-258. Residues Ser-214, Asn-216, and Ser-258 each coordinate isopentenyl diphosphate.

It belongs to the IspH family. It depends on [4Fe-4S] cluster as a cofactor.

The catalysed reaction is isopentenyl diphosphate + 2 oxidized [2Fe-2S]-[ferredoxin] + H2O = (2E)-4-hydroxy-3-methylbut-2-enyl diphosphate + 2 reduced [2Fe-2S]-[ferredoxin] + 2 H(+). It carries out the reaction dimethylallyl diphosphate + 2 oxidized [2Fe-2S]-[ferredoxin] + H2O = (2E)-4-hydroxy-3-methylbut-2-enyl diphosphate + 2 reduced [2Fe-2S]-[ferredoxin] + 2 H(+). It participates in isoprenoid biosynthesis; dimethylallyl diphosphate biosynthesis; dimethylallyl diphosphate from (2E)-4-hydroxy-3-methylbutenyl diphosphate: step 1/1. Its pathway is isoprenoid biosynthesis; isopentenyl diphosphate biosynthesis via DXP pathway; isopentenyl diphosphate from 1-deoxy-D-xylulose 5-phosphate: step 6/6. Its function is as follows. Catalyzes the conversion of 1-hydroxy-2-methyl-2-(E)-butenyl 4-diphosphate (HMBPP) into a mixture of isopentenyl diphosphate (IPP) and dimethylallyl diphosphate (DMAPP). Acts in the terminal step of the DOXP/MEP pathway for isoprenoid precursor biosynthesis. The protein is 4-hydroxy-3-methylbut-2-enyl diphosphate reductase of Campylobacter jejuni subsp. jejuni serotype O:6 (strain 81116 / NCTC 11828).